A 536-amino-acid polypeptide reads, in one-letter code: Lysosomal acid glucosylceramidase (536 aa).

The first 39 residues, 1–39, serve as a signal peptide directing secretion; the sequence is MEFSSPSREECPKPSGRVNIMAGSLTGLLLLQAVSWASG. Cystine bridges form between Cys43/Cys55 and Cys57/Cys62. N-linked (GlcNAc...) asparagine glycosylation is found at Asn58, Asn98, and Asn185. Residue Glu274 is the Proton donor of the active site. N-linked (GlcNAc...) asparagine glycosylation is present at Asn309. The Nucleophile role is filled by Glu379. An N-linked (GlcNAc...) asparagine glycan is attached at Asn501.

This sequence belongs to the glycosyl hydrolase 30 family. Interacts with saposin-C. Interacts with SCARB2. Interacts with TCP1. Interacts with GRN; this interaction prevents aggregation of GBA1-SCARB2 complex via interaction with HSPA1A upon stress.

It localises to the lysosome membrane. The enzyme catalyses a beta-D-glucosyl-(1&lt;-&gt;1')-N-acylsphing-4-enine + H2O = an N-acylsphing-4-enine + D-glucose. It catalyses the reaction a beta-D-galactosyl-(1&lt;-&gt;1')-N-acylsphing-4-enine + H2O = an N-acylsphing-4-enine + D-galactose. It carries out the reaction cholesteryl 3-beta-D-glucoside + H2O = cholesterol + D-glucose. The catalysed reaction is a beta-D-glucosyl-(1&lt;-&gt;1')-N-acylsphing-4-enine + cholesterol = cholesteryl 3-beta-D-glucoside + an N-acylsphing-4-enine. The enzyme catalyses beta-D-glucosyl-N-(9Z-octadecenoyl)-sphing-4E-enine + cholesterol = N-(9Z-octadecenoyl)-sphing-4-enine + cholesteryl 3-beta-D-glucoside. It catalyses the reaction beta-D-glucosyl-N-octanoylsphing-4E-enine + cholesterol = N-octanoylsphing-4-enine + cholesteryl 3-beta-D-glucoside. It carries out the reaction beta-D-glucosyl-N-dodecanoylsphing-4-enine + cholesterol = N-dodecanoylsphing-4-enine + cholesteryl 3-beta-D-glucoside. The catalysed reaction is beta-D-glucosyl-(1&lt;-&gt;1)-N-octadecanoylsphing-4-enine + cholesterol = N-octadecanoylsphing-4-enine + cholesteryl 3-beta-D-glucoside. The enzyme catalyses beta-D-glucosyl-(1&lt;-&gt;1')-N-(15Z-tetracosenoyl)-sphing-4-enine + cholesterol = N-(15Z-tetracosenoyl)-sphing-4-enine + cholesteryl 3-beta-D-glucoside. It catalyses the reaction a beta-D-galactosyl-(1&lt;-&gt;1')-N-acylsphing-4-enine + cholesterol = cholesteryl 3-beta-D-galactoside + an N-acylsphing-4-enine. It carries out the reaction 1-(beta-D-galactosyl)-N-dodecanoylsphing-4-enine + cholesterol = cholesteryl 3-beta-D-galactoside + N-dodecanoylsphing-4-enine. The catalysed reaction is a beta-D-xylosyl-(1&lt;-&gt;1')-N-acylsphing-4-enine + cholesterol = cholesteryl 3-beta-D-xyloside + an N-acylsphing-4-enine. The enzyme catalyses beta-D-xylosyl-(1&lt;-&gt;1')-N-(9Z-octadecenoyl)-sphing-4-enine + cholesterol = cholesteryl 3-beta-D-xyloside + N-(9Z-octadecenoyl)-sphing-4-enine. It functions in the pathway steroid metabolism; cholesterol metabolism. It participates in sphingolipid metabolism. Functionally, glucosylceramidase that catalyzes, within the lysosomal compartment, the hydrolysis of glucosylceramides/GlcCers (such as beta-D-glucosyl-(1&lt;-&gt;1')-N-acylsphing-4-enine) into free ceramides (such as N-acylsphing-4-enine) and glucose. Plays a central role in the degradation of complex lipids and the turnover of cellular membranes. Through the production of ceramides, participates in the PKC-activated salvage pathway of ceramide formation. Catalyzes the glucosylation of cholesterol, through a transglucosylation reaction where glucose is transferred from GlcCer to cholesterol. GlcCer containing mono-unsaturated fatty acids (such as beta-D-glucosyl-N-(9Z-octadecenoyl)-sphing-4-enine) are preferred as glucose donors for cholesterol glucosylation when compared with GlcCer containing same chain length of saturated fatty acids (such as beta-D-glucosyl-N-octadecanoyl-sphing-4-enine). Under specific conditions, may alternatively catalyze the reverse reaction, transferring glucose from cholesteryl 3-beta-D-glucoside to ceramide. Can also hydrolyze cholesteryl 3-beta-D-glucoside producing glucose and cholesterol. Catalyzes the hydrolysis of galactosylceramides/GalCers (such as beta-D-galactosyl-(1&lt;-&gt;1')-N-acylsphing-4-enine), as well as the transfer of galactose between GalCers and cholesterol in vitro, but with lower activity than with GlcCers. Contrary to GlcCer and GalCer, xylosylceramide/XylCer (such as beta-D-xyosyl-(1&lt;-&gt;1')-N-acylsphing-4-enine) is not a good substrate for hydrolysis, however it is a good xylose donor for transxylosylation activity to form cholesteryl 3-beta-D-xyloside. The polypeptide is Lysosomal acid glucosylceramidase (GBA1) (Pongo abelii (Sumatran orangutan)).